The sequence spans 425 residues: Enolase 2 (425 aa).

Position 163 (Q163) interacts with (2R)-2-phosphoglycerate. E205 (proton donor) is an active-site residue. Mg(2+)-binding residues include D242, E285, and D312. K337, R366, S367, and K388 together coordinate (2R)-2-phosphoglycerate. The active-site Proton acceptor is K337.

This sequence belongs to the enolase family. Requires Mg(2+) as cofactor.

It localises to the cytoplasm. The protein localises to the secreted. It is found in the cell surface. It carries out the reaction (2R)-2-phosphoglycerate = phosphoenolpyruvate + H2O. It functions in the pathway carbohydrate degradation; glycolysis; pyruvate from D-glyceraldehyde 3-phosphate: step 4/5. Catalyzes the reversible conversion of 2-phosphoglycerate (2-PG) into phosphoenolpyruvate (PEP). It is essential for the degradation of carbohydrates via glycolysis. This chain is Enolase 2, found in Cupriavidus metallidurans (strain ATCC 43123 / DSM 2839 / NBRC 102507 / CH34) (Ralstonia metallidurans).